A 121-amino-acid polypeptide reads, in one-letter code: Lysozyme (121 aa).

One can recognise a C-type lysozyme domain in the interval 1–121; the sequence is KTFTRCELVQ…NKPLPDISKC (121 aa). 4 disulfide bridges follow: cysteine 6–cysteine 121, cysteine 27–cysteine 110, cysteine 62–cysteine 76, and cysteine 72–cysteine 90. Active-site residues include glutamate 32 and aspartate 50.

This sequence belongs to the glycosyl hydrolase 22 family.

The catalysed reaction is Hydrolysis of (1-&gt;4)-beta-linkages between N-acetylmuramic acid and N-acetyl-D-glucosamine residues in a peptidoglycan and between N-acetyl-D-glucosamine residues in chitodextrins.. Its function is as follows. Lysozymes have primarily a bacteriolytic function; those in tissues and body fluids are associated with the monocyte-macrophage system and enhance the activity of immunoagents. The polypeptide is Lysozyme (Galleria mellonella (Greater wax moth)).